A 214-amino-acid chain; its full sequence is Osteoclast-stimulating factor 1 (214 aa).

Residues 12–71 form the SH3 domain; sequence GQVKVFRALYTFEPRTPDELYFEEGDILYIADMSDTNWWKGTCKGKTGLIPSNYVAEQAE. ANK repeat units follow at residues 72-101, 105-135, and 139-168; these read SIDN…GVNG, AGST…ELNQ, and LGDT…RTDL.

It is found in the cytoplasm. Induces bone resorption, acting probably through a signaling cascade which results in the secretion of factor(s) enhancing osteoclast formation and activity. In Xenopus laevis (African clawed frog), this protein is Osteoclast-stimulating factor 1 (ostf1).